Consider the following 659-residue polypeptide: ATP-binding cassette sub-family D member 3 (659 aa).

Positions 2-61 (AAFSKYLTARNSSLAGAAFLLFCLLHKRRRALGLHGKKSGKPPLQNNEKEGKKERAVVDK) are interaction with PEX19. N-linked (GlcNAc...) asparagine glycosylation is present at N12. Position 61 is an N6-acetyllysine (K61). A helical membrane pass occupies residues 84–104 (GYLILIAVMLVSRTYCDVWMI). The 288-residue stretch at 85–372 (YLILIAVMLV…MLLRMSQALG (288 aa)) folds into the ABC transmembrane type-1 domain. The N-linked (GlcNAc...) asparagine glycan is linked to N106. A helical membrane pass occupies residues 126–146 (LFNFIAAMPLISLVNNFLKYG). N206 carries N-linked (GlcNAc...) asparagine glycosylation. A helical membrane pass occupies residues 224-244 (AIGAQGPASMMAYLLVSGLFL). At K260 the chain carries N6-acetyllysine. A helical transmembrane segment spans residues 313–333 (MGFIDSIIAKYIATVVGYLVV). Position 399 is an N6-acetyllysine (K399). S424 is subject to Phosphoserine. Residues 434–659 (INADNIIKFD…ITEDTVEFGS (226 aa)) enclose the ABC transporter domain. Position 473–480 (473–480 (GPNGCGKS)) interacts with ATP. The residue at position 533 (K533) is an N6-acetyllysine. S659 carries the phosphoserine modification.

This sequence belongs to the ABC transporter superfamily. ABCD family. Peroxisomal fatty acyl CoA transporter (TC 3.A.1.203) subfamily. In terms of assembly, homodimers. Can form heterodimers with ABCD1 and ABCD2. Dimerization is necessary to form an active transporter. Interacts with PEX19; mediates the targeting of ABCD3 to peroxisomes. In terms of processing, ubiquitinated by PEX2 during pexophagy in response to starvation, leading to its degradation.

It localises to the peroxisome membrane. It catalyses the reaction a very long-chain fatty acyl-CoA + H2O = a very long-chain fatty acid + CoA + H(+). The enzyme catalyses a very long-chain fatty acid(in) + ATP + H2O = a very long-chain fatty acid(out) + ADP + phosphate + H(+). The catalysed reaction is a long-chain fatty acyl-CoA + H2O = a long-chain fatty acid + CoA + H(+). It carries out the reaction a long-chain fatty acid(in) + ATP + H2O = a long-chain fatty acid(out) + ADP + phosphate + H(+). It catalyses the reaction pristanoyl-CoA + H2O = 2,6,10,14-tetramethylpentadecanoate + CoA + H(+). The enzyme catalyses 2,6,10,14-tetramethylpentadecanoate(in) + ATP + H2O = 2,6,10,14-tetramethylpentadecanoate(out) + ADP + phosphate + H(+). The catalysed reaction is hexadecanedioyl-CoA + H2O = hexadecanedioate + CoA + H(+). It carries out the reaction hexadecanedioate(in) + ATP + H2O = hexadecanedioate(out) + ADP + phosphate + H(+). It catalyses the reaction (5Z,8Z,11Z,14Z,17Z)-eicosapentaenoyl-CoA + H2O = (5Z,8Z,11Z,14Z,17Z)-eicosapentaenoate + CoA + H(+). The enzyme catalyses (5Z,8Z,11Z,14Z,17Z)-eicosapentaenoate(in) + ATP + H2O = (5Z,8Z,11Z,14Z,17Z)-eicosapentaenoate(out) + ADP + phosphate + H(+). The catalysed reaction is (4Z,7Z,10Z,13Z,16Z,19Z)-docosahexaenoyl-CoA + H2O = (4Z,7Z,10Z,13Z,16Z,19Z)-docosahexaenoate + CoA + H(+). It carries out the reaction (4Z,7Z,10Z,13Z,16Z,19Z)-docosahexaenoate(in) + ATP + H2O = (4Z,7Z,10Z,13Z,16Z,19Z)-docosahexaenoate(out) + ADP + phosphate + H(+). Its function is as follows. Broad substrate specificity ATP-dependent transporter of the ATP-binding cassette (ABC) family that catalyzes the transport of long-chain fatty acids (LCFA)-CoA, dicarboxylic acids-CoA, long-branched-chain fatty acids-CoA and bile acids from the cytosol to the peroxisome lumen for beta-oxydation. Has fatty acyl-CoA thioesterase and ATPase activities. Probably hydrolyzes fatty acyl-CoAs into free fatty acids prior to their ATP-dependent transport into peroxisomes. Thus, play a role in regulation of LCFAs and energy metabolism namely, in the degradation and biosynthesis of fatty acids by beta-oxidation. The polypeptide is ATP-binding cassette sub-family D member 3 (Abcd3) (Rattus norvegicus (Rat)).